We begin with the raw amino-acid sequence, 341 residues long: Acetylpolyamine amidohydrolase (341 aa).

Substrate is bound by residues Tyr-19, Glu-106, and Glu-117. The active-site Proton donor/acceptor is the His-159. Residues Asp-195, His-197, and Asp-284 each coordinate Zn(2+). Residue Tyr-323 participates in substrate binding.

This sequence belongs to the histone deacetylase family. In terms of assembly, homodimer. Zn(2+) serves as cofactor.

It catalyses the reaction N-acetylputrescine + H2O = putrescine + acetate. The catalysed reaction is N-acetylcadaverine + H2O = cadaverine + acetate. The enzyme catalyses N(1)-acetylspermine + H2O = spermine + acetate. It carries out the reaction N(1)-acetylspermidine + H2O = spermidine + acetate. It catalyses the reaction N(8)-acetylspermidine + H2O = spermidine + acetate. It functions in the pathway amine and polyamine metabolism. With respect to regulation, zinc ions inhibit enzyme activity in a dose-dependent manner. Inhibited by KCl at concentrations above 10 mM. Inhibited by o-oxyquinoline in vitro, suggesting that it is a metalloprotein. Inhibited by various substrate N(8)-acetylspermidine analogs bearing different metal-binding groups such as trifluoromethylketone, thiol, or hydroxamate, and by hydroxamate analogs of short-chain acetyldiamines. Its function is as follows. Involved in polyamine metabolism. Catalyzes the deacetylation of various acetylated polyamines such as N-acetylputrescine, N-acetylcadaverine, N(1)-acetylspermine, N(1)-acetylspermidine and N(8)-acetylspermidine. In vitro, is also able to deacetylate L-Lys(epsilon-acetyl)coumarin, but has very low activity towards the larger tetrapeptide N-acetyl-L-Arg-L-His-L-Lys(epsilon-acetyl)-L-Lys(epsilon-acetyl)coumarin. In Mycoplana ramosa (Mycoplana bullata), this protein is Acetylpolyamine amidohydrolase.